We begin with the raw amino-acid sequence, 290 residues long: Probable lipid hydrolase 463L (290 aa).

2 consecutive transmembrane segments (helical) span residues 26-46 (TLVL…LNGL) and 53-73 (ISTF…SIGY). The PNPLA domain occupies 27 to 207 (LVLSGGAMRG…WNNFPIDIAI (181 aa)). The GXSXG motif lies at 58-62 (GISSG). Catalysis depends on Ser-60, which acts as the Nucleophile. Residue Asp-194 is the Proton acceptor of the active site. Positions 194–196 (DGG) match the DGA/G motif.

It is found in the membrane. Probable lipid hydrolase. This is Probable lipid hydrolase 463L from Invertebrate iridescent virus 6 (IIV-6).